An 89-amino-acid chain; its full sequence is Large ribosomal subunit protein bL27 (89 aa).

Residues 1–23 (MAHKKAGGSSRNGRDSAGKRLGI) are disordered.

It belongs to the bacterial ribosomal protein bL27 family.

This Rhodopseudomonas palustris (strain BisA53) protein is Large ribosomal subunit protein bL27.